The sequence spans 906 residues: Protein translocase subunit SecA (906 aa).

Residues Q86, 104 to 108, and D499 each bind ATP; that span reads GEGKT. Positions 865 to 885 are disordered; it reads VSRIDPKDRNPEDPTSWGRVS. Positions 890, 892, 901, and 902 each coordinate Zn(2+).

The protein belongs to the SecA family. In terms of assembly, monomer and homodimer. Part of the essential Sec protein translocation apparatus which comprises SecA, SecYEG and auxiliary proteins SecDF-YajC and YidC. Requires Zn(2+) as cofactor.

Its subcellular location is the cell inner membrane. It is found in the cytoplasm. The enzyme catalyses ATP + H2O + cellular proteinSide 1 = ADP + phosphate + cellular proteinSide 2.. Part of the Sec protein translocase complex. Interacts with the SecYEG preprotein conducting channel. Has a central role in coupling the hydrolysis of ATP to the transfer of proteins into and across the cell membrane, serving both as a receptor for the preprotein-SecB complex and as an ATP-driven molecular motor driving the stepwise translocation of polypeptide chains across the membrane. This chain is Protein translocase subunit SecA, found in Rickettsia canadensis (strain McKiel).